The following is a 43-amino-acid chain: Protein PsbN (43 aa).

Residues 7 to 24 (VAISISRSLVSFTGYALY) form a helical membrane-spanning segment.

It belongs to the PsbN family.

It is found in the plastid. The protein resides in the chloroplast thylakoid membrane. Its function is as follows. May play a role in photosystem I and II biogenesis. In Ginkgo biloba (Ginkgo), this protein is Protein PsbN.